The primary structure comprises 782 residues: Endonuclease MutS2 (782 aa).

336 to 343 contributes to the ATP binding site; it reads GPNTGGKT. A Smr domain is found at 707 to 782; it reads LDLRGYRYED…GFGVTVATLK (76 aa).

It belongs to the DNA mismatch repair MutS family. MutS2 subfamily. Homodimer. Binds to stalled ribosomes, contacting rRNA.

Its function is as follows. Endonuclease that is involved in the suppression of homologous recombination and thus may have a key role in the control of bacterial genetic diversity. Functionally, acts as a ribosome collision sensor, splitting the ribosome into its 2 subunits. Detects stalled/collided 70S ribosomes which it binds and splits by an ATP-hydrolysis driven conformational change. Acts upstream of the ribosome quality control system (RQC), a ribosome-associated complex that mediates the extraction of incompletely synthesized nascent chains from stalled ribosomes and their subsequent degradation. Probably generates substrates for RQC. This chain is Endonuclease MutS2, found in Staphylococcus aureus (strain MSSA476).